The chain runs to 127 residues: Aspartate 1-decarboxylase (127 aa).

Ser25 serves as the catalytic Schiff-base intermediate with substrate; via pyruvic acid. The residue at position 25 (Ser25) is a Pyruvic acid (Ser). Thr57 is a binding site for substrate. The Proton donor role is filled by Tyr58. 73–75 provides a ligand contact to substrate; sequence GAA.

Belongs to the PanD family. Heterooctamer of four alpha and four beta subunits. Requires pyruvate as cofactor. In terms of processing, is synthesized initially as an inactive proenzyme, which is activated by self-cleavage at a specific serine bond to produce a beta-subunit with a hydroxyl group at its C-terminus and an alpha-subunit with a pyruvoyl group at its N-terminus.

Its subcellular location is the cytoplasm. It catalyses the reaction L-aspartate + H(+) = beta-alanine + CO2. Its pathway is cofactor biosynthesis; (R)-pantothenate biosynthesis; beta-alanine from L-aspartate: step 1/1. Functionally, catalyzes the pyruvoyl-dependent decarboxylation of aspartate to produce beta-alanine. This Exiguobacterium sibiricum (strain DSM 17290 / CCUG 55495 / CIP 109462 / JCM 13490 / 255-15) protein is Aspartate 1-decarboxylase.